Reading from the N-terminus, the 1032-residue chain is Phosphoenolpyruvate carboxylase 4 (1032 aa).

Residue H154 is part of the active site. The segment at 377–407 is disordered; the sequence is PNLQKQNEQDFSESDWEKIDNGSRSGLTSRG. Residues 398 to 407 show a composition bias toward polar residues; sequence GSRSGLTSRG. K699 is an active-site residue.

Belongs to the PEPCase type 1 family. In terms of assembly, homotetramer. It depends on Mg(2+) as a cofactor. As to expression, expressed at low levels in flowers and siliques, and detectable in roots.

The protein localises to the cytoplasm. The enzyme catalyses oxaloacetate + phosphate = phosphoenolpyruvate + hydrogencarbonate. Functionally, through the carboxylation of phosphoenolpyruvate (PEP) it forms oxaloacetate, a four-carbon dicarboxylic acid source for the tricarboxylic acid cycle. This is Phosphoenolpyruvate carboxylase 4 (PPC4) from Arabidopsis thaliana (Mouse-ear cress).